The following is a 973-amino-acid chain: Putative helicase 022R (973 aa).

The disordered stretch occupies residues 473–502 (AKARGGRDSGNEDDEEDSATDEDDSNPWDS). Residues 483–498 (NEDDEEDSATDEDDSN) show a composition bias toward acidic residues. The region spanning 658–840 (GPVTKLLAFF…FVTPGTTAPA (183 aa)) is the SF3 helicase domain. 702–709 (GTGNNGKT) contributes to the ATP binding site.

In Frog virus 3 (isolate Goorha) (FV-3), this protein is Putative helicase 022R.